Reading from the N-terminus, the 402-residue chain is MDRTETRFRKRGQITGKITTSRQPHPQNEQSPQRSTSGYPLQEVVDDEMLGPSAPGVDPSPPCRSLGWKRKREWSDESEEEPEKELAPEPEETWVVEMLCGLKMKLKQQRVSSILPEHHKDFNSQLAPGVDPSPPHRSFCWKRKMEWWDESEESLEEEPRKVLAPEPEEIWVAEMLCGLKMKLKRRRVSLVLPEHHEAFNRLLEDPVIKRFLAWDKDLRVSDKYLLAMVIAYFSRAGFPSWQYQRIHFFLALYLANDMEEDDEDSKQNIFHFLYRKNRSRIPLLRKPWFQLGHSMNPRARKNRSRIPLLRKRRFQLYRSTNPRARKNRSRIPLLRKRRFQLYRSMNSRARKNRSQIVLFQKRRFHFFCSMSCRAWVSPEELEEIQAYDPEHWVWARDRAHLS.

The interval 1-89 (MDRTETRFRK…EEPEKELAPE (89 aa)) is disordered. Positions 16–39 (GKITTSRQPHPQNEQSPQRSTSGY) are enriched in polar residues. Residues 76 to 89 (DESEEEPEKELAPE) are compositionally biased toward acidic residues.

The protein belongs to the Speedy/Ringo family.

The chain is Speedy protein E2B (SPDYE2B) from Homo sapiens (Human).